Here is a 241-residue protein sequence, read N- to C-terminus: MRIEIKLLPLQDNPVIPFNYNYELYSQIVEKAGAIEPRIVKLLESPHGYWTFSRIIIRKREIIPEKGIKILSDDISLYISSSNKEIIKGIVEGIEKSPEFKIGDVGFLVADIKALKSKEIKNVNIFSTLSPIVVRTVKFEGDKLKHWDLYPHDELFLDRLRKVMLLRYHEVMGDLPEDKDFRIELIKFKPTRLIVKDSYIRGSLMVFRYYGSKEIAKFGYENGFGEKTNLGFGMVKIIEEQ.

Belongs to the CRISPR-associated protein Cas6/Cse3/CasE family. In terms of assembly, binds crRNA.

CRISPR (clustered regularly interspaced short palindromic repeat), is an adaptive immune system that provides protection against mobile genetic elements (viruses, transposable elements and conjugative plasmids). CRISPR clusters contain sequences complementary to antecedent mobile elements and target invading nucleic acids. CRISPR clusters are transcribed and processed into CRISPR RNA (crRNA), also called psiRNA (prokaryotic silencing) in this organism (Potential). In Pyrococcus furiosus (strain ATCC 43587 / DSM 3638 / JCM 8422 / Vc1), this protein is Putative CRISPR-associated endoribonuclease-like protein Cas6 (cas6b).